Reading from the N-terminus, the 251-residue chain is Imidazole glycerol phosphate synthase subunit HisF (251 aa).

Catalysis depends on residues D11 and D130.

The protein belongs to the HisA/HisF family. Heterodimer of HisH and HisF.

It localises to the cytoplasm. The enzyme catalyses 5-[(5-phospho-1-deoxy-D-ribulos-1-ylimino)methylamino]-1-(5-phospho-beta-D-ribosyl)imidazole-4-carboxamide + L-glutamine = D-erythro-1-(imidazol-4-yl)glycerol 3-phosphate + 5-amino-1-(5-phospho-beta-D-ribosyl)imidazole-4-carboxamide + L-glutamate + H(+). It functions in the pathway amino-acid biosynthesis; L-histidine biosynthesis; L-histidine from 5-phospho-alpha-D-ribose 1-diphosphate: step 5/9. Functionally, IGPS catalyzes the conversion of PRFAR and glutamine to IGP, AICAR and glutamate. The HisF subunit catalyzes the cyclization activity that produces IGP and AICAR from PRFAR using the ammonia provided by the HisH subunit. The polypeptide is Imidazole glycerol phosphate synthase subunit HisF (Chlorobium phaeobacteroides (strain BS1)).